We begin with the raw amino-acid sequence, 627 residues long: 1-deoxy-D-xylulose-5-phosphate synthase (627 aa).

Thiamine diphosphate is bound by residues H75 and A116–S118. D147 lines the Mg(2+) pocket. Thiamine diphosphate contacts are provided by residues G148–A149, N177, Y284, and E366. Residue N177 coordinates Mg(2+).

The protein belongs to the transketolase family. DXPS subfamily. Homodimer. The cofactor is Mg(2+). Thiamine diphosphate serves as cofactor.

It carries out the reaction D-glyceraldehyde 3-phosphate + pyruvate + H(+) = 1-deoxy-D-xylulose 5-phosphate + CO2. The protein operates within metabolic intermediate biosynthesis; 1-deoxy-D-xylulose 5-phosphate biosynthesis; 1-deoxy-D-xylulose 5-phosphate from D-glyceraldehyde 3-phosphate and pyruvate: step 1/1. Catalyzes the acyloin condensation reaction between C atoms 2 and 3 of pyruvate and glyceraldehyde 3-phosphate to yield 1-deoxy-D-xylulose-5-phosphate (DXP). The polypeptide is 1-deoxy-D-xylulose-5-phosphate synthase (Bordetella petrii (strain ATCC BAA-461 / DSM 12804 / CCUG 43448)).